An 81-amino-acid chain; its full sequence is Small ribosomal subunit protein bS16 (81 aa).

The protein belongs to the bacterial ribosomal protein bS16 family.

The polypeptide is Small ribosomal subunit protein bS16 (Agathobacter rectalis (strain ATCC 33656 / DSM 3377 / JCM 17463 / KCTC 5835 / VPI 0990) (Eubacterium rectale)).